The following is a 449-amino-acid chain: Phosphoglucosamine mutase (449 aa).

S100 functions as the Phosphoserine intermediate in the catalytic mechanism. Residues S100, D240, D242, and D244 each contribute to the Mg(2+) site. Phosphoserine is present on S100.

Belongs to the phosphohexose mutase family. Requires Mg(2+) as cofactor. Post-translationally, activated by phosphorylation.

The catalysed reaction is alpha-D-glucosamine 1-phosphate = D-glucosamine 6-phosphate. In terms of biological role, catalyzes the conversion of glucosamine-6-phosphate to glucosamine-1-phosphate. The protein is Phosphoglucosamine mutase of Clostridium novyi (strain NT).